An 883-amino-acid polypeptide reads, in one-letter code: Alanine--tRNA ligase (883 aa).

Histidine 565, histidine 569, cysteine 675, and histidine 679 together coordinate Zn(2+).

It belongs to the class-II aminoacyl-tRNA synthetase family. It depends on Zn(2+) as a cofactor.

It localises to the cytoplasm. The enzyme catalyses tRNA(Ala) + L-alanine + ATP = L-alanyl-tRNA(Ala) + AMP + diphosphate. In terms of biological role, catalyzes the attachment of alanine to tRNA(Ala) in a two-step reaction: alanine is first activated by ATP to form Ala-AMP and then transferred to the acceptor end of tRNA(Ala). Also edits incorrectly charged Ser-tRNA(Ala) and Gly-tRNA(Ala) via its editing domain. The sequence is that of Alanine--tRNA ligase from Rhodospirillum rubrum (strain ATCC 11170 / ATH 1.1.1 / DSM 467 / LMG 4362 / NCIMB 8255 / S1).